The following is a 272-amino-acid chain: Cerberus (272 aa).

The N-terminal stretch at 1–19 (MSLLLLQLLVLSCLGDTEP) is a signal peptide. Cystine bridges form between C168-C215, C182-C229, C192-C245, and C196-C247. A CTCK domain is found at 168–253 (CRTLPFSQSV…ECNCETQKIE (86 aa)). A glycan (N-linked (GlcNAc...) asparagine) is linked at N228.

Belongs to the DAN family.

The protein resides in the secreted. In terms of biological role, cytokine that acts as a regulator of the activity of Nodal/BMP pathways during the establishment of bilateral asymmetry in the head and trunk of the embryo. The protein is Cerberus (CER1) of Gallus gallus (Chicken).